The chain runs to 329 residues: Porphobilinogen deaminase (329 aa).

Cys-250 is modified (S-(dipyrrolylmethanemethyl)cysteine).

This sequence belongs to the HMBS family. Monomer. Dipyrromethane serves as cofactor.

It catalyses the reaction 4 porphobilinogen + H2O = hydroxymethylbilane + 4 NH4(+). The protein operates within porphyrin-containing compound metabolism; protoporphyrin-IX biosynthesis; coproporphyrinogen-III from 5-aminolevulinate: step 2/4. Tetrapolymerization of the monopyrrole PBG into the hydroxymethylbilane pre-uroporphyrinogen in several discrete steps. The sequence is that of Porphobilinogen deaminase from Burkholderia mallei (strain NCTC 10247).